Consider the following 157-residue polypeptide: SsrA-binding protein (157 aa).

The disordered stretch occupies residues 133-157; that stretch reads LHDKRETEKKRDWSREKGRLLRARG. Basic and acidic residues predominate over residues 135 to 151; sequence DKRETEKKRDWSREKGR.

The protein belongs to the SmpB family.

It localises to the cytoplasm. Its function is as follows. Required for rescue of stalled ribosomes mediated by trans-translation. Binds to transfer-messenger RNA (tmRNA), required for stable association of tmRNA with ribosomes. tmRNA and SmpB together mimic tRNA shape, replacing the anticodon stem-loop with SmpB. tmRNA is encoded by the ssrA gene; the 2 termini fold to resemble tRNA(Ala) and it encodes a 'tag peptide', a short internal open reading frame. During trans-translation Ala-aminoacylated tmRNA acts like a tRNA, entering the A-site of stalled ribosomes, displacing the stalled mRNA. The ribosome then switches to translate the ORF on the tmRNA; the nascent peptide is terminated with the 'tag peptide' encoded by the tmRNA and targeted for degradation. The ribosome is freed to recommence translation, which seems to be the essential function of trans-translation. This chain is SsrA-binding protein, found in Bradyrhizobium diazoefficiens (strain JCM 10833 / BCRC 13528 / IAM 13628 / NBRC 14792 / USDA 110).